The chain runs to 187 residues: Adenylate kinase (187 aa).

Residue 10 to 15 coordinates ATP; that stretch reads GSGKGT. Positions 30 to 59 are NMP; that stretch reads STGDLLRAEVAAGSPLGVKAKEVMARGDLV. Residues Thr31, Arg36, 57–59, 85–88, and Gln92 each bind AMP; these read DLV and GYPR. The LID stretch occupies residues 126–136; the sequence is GRAKAEGREDD. Arg127 contributes to the ATP binding site. The AMP site is built by Arg133 and Arg144. An ATP-binding site is contributed by Gly172.

This sequence belongs to the adenylate kinase family. Monomer.

The protein resides in the cytoplasm. The catalysed reaction is AMP + ATP = 2 ADP. It participates in purine metabolism; AMP biosynthesis via salvage pathway; AMP from ADP: step 1/1. Its function is as follows. Catalyzes the reversible transfer of the terminal phosphate group between ATP and AMP. Plays an important role in cellular energy homeostasis and in adenine nucleotide metabolism. In Xanthomonas campestris pv. campestris (strain B100), this protein is Adenylate kinase.